The primary structure comprises 244 residues: Small ribosomal subunit protein eS4 (244 aa).

Residues 43 to 106 (LPLLLIVRDT…NENYLVLFDE (64 aa)) form the S4 RNA-binding domain.

Belongs to the eukaryotic ribosomal protein eS4 family.

The sequence is that of Small ribosomal subunit protein eS4 (rps4e) from Methanococcus vannielii.